A 431-amino-acid polypeptide reads, in one-letter code: tRNA(Ile)-lysidine synthase (431 aa).

S20 to S25 is an ATP binding site.

It belongs to the tRNA(Ile)-lysidine synthase family.

It is found in the cytoplasm. It catalyses the reaction cytidine(34) in tRNA(Ile2) + L-lysine + ATP = lysidine(34) in tRNA(Ile2) + AMP + diphosphate + H(+). Its function is as follows. Ligates lysine onto the cytidine present at position 34 of the AUA codon-specific tRNA(Ile) that contains the anticodon CAU, in an ATP-dependent manner. Cytidine is converted to lysidine, thus changing the amino acid specificity of the tRNA from methionine to isoleucine. The chain is tRNA(Ile)-lysidine synthase from Escherichia coli O157:H7.